Consider the following 160-residue polypeptide: Large ribosomal subunit protein uL22c (160 aa).

It belongs to the universal ribosomal protein uL22 family. In terms of assembly, part of the 50S ribosomal subunit.

The protein localises to the plastid. It is found in the chloroplast. This protein binds specifically to 23S rRNA. Functionally, the globular domain of the protein is located near the polypeptide exit tunnel on the outside of the subunit, while an extended beta-hairpin is found that lines the wall of the exit tunnel in the center of the 70S ribosome. The protein is Large ribosomal subunit protein uL22c (rpl22) of Lepidium virginicum (Virginia pepperweed).